We begin with the raw amino-acid sequence, 423 residues long: MDIDQYMTDLGRRARHASRAMARASTAAKNAALDAVARAIERDASALKEANARDVARARDKGLDAAFIDRLTLSDKALKTMVEGLRQVASLADPIGEISNLKYRPSGIQVGQMRVPLGVIGIIYESRPNVTIDAAALCLKSGNATILRGGSEALESNAALAKLIGEGLEAAGLPQDAVQVVATADRAAVGKLITMTEYVDVIVPRGGKSLIERLINEARVPMIKHLDGICHVYVDDRADLAKALTVCDNAKTHRYGTCNTMETLLVSSGIAAALLPPLGKLYRDKQVELRVDAAARAVLADAGVGPLVDATDADWHTEYLAPVLAIKVVDGLDAAIEHINHYGSHHTDAIVTEDHDRAMRFLREVDSASVMVNASTRFADGFEFGLGAEIGISNDKLHARGPVGLEGLTSLKYVVLGHGEGRQ.

The protein belongs to the gamma-glutamyl phosphate reductase family.

It is found in the cytoplasm. The catalysed reaction is L-glutamate 5-semialdehyde + phosphate + NADP(+) = L-glutamyl 5-phosphate + NADPH + H(+). The protein operates within amino-acid biosynthesis; L-proline biosynthesis; L-glutamate 5-semialdehyde from L-glutamate: step 2/2. Catalyzes the NADPH-dependent reduction of L-glutamate 5-phosphate into L-glutamate 5-semialdehyde and phosphate. The product spontaneously undergoes cyclization to form 1-pyrroline-5-carboxylate. The chain is Gamma-glutamyl phosphate reductase from Burkholderia vietnamiensis (strain G4 / LMG 22486) (Burkholderia cepacia (strain R1808)).